Consider the following 811-residue polypeptide: Abnormal pharyngeal pumping eat-20 (811 aa).

The signal sequence occupies residues 1–20 (MTTFCRVLLIFGIYVAVSCA). Topologically, residues 21–749 (QSVEDDVFHF…GKQSSAVASW (729 aa)) are extracellular. N-linked (GlcNAc...) asparagine glycans are attached at residues Asn90, Asn171, and Asn232. EGF-like domains follow at residues 220 to 257 (PPSPCANHECHNNGTCLVSQEGAAMCLCRNGFTGDRCE), 258 to 293 (LDVCSAVPCQNGGVCRSNNGIAYCECPPAFSGLLCE), and 301 to 335 (AAPICNPECSNGQCVLKDGQPQCECRQGFTGANCN). 9 disulfides stabilise this stretch: Cys224/Cys235, Cys229/Cys245, Cys247/Cys256, Cys261/Cys272, Cys266/Cys281, Cys283/Cys292, Cys305/Cys314, Cys309/Cys323, and Cys325/Cys334. Residue Asn371 is glycosylated (N-linked (GlcNAc...) asparagine). 3 disordered regions span residues 544 to 579 (FVSPNMPDENEEEEEDETTDETEETFPTPSTMQVAT), 592 to 659 (FPTT…AIST), and 690 to 739 (PHPQ…HTSS). Residues 551-567 (DENEEEEEDETTDETEE) are compositionally biased toward acidic residues. A compositionally biased stretch (polar residues) spans 570 to 579 (PTPSTMQVAT). Acidic residues predominate over residues 597-612 (DMEETDEEEDMTEEVT). The segment covering 626-639 (PSSTTFTTEAPTTT) has biased composition (low complexity). Acidic residues-rich tracts occupy residues 640 to 655 (MEEEETTEQEEIESEE) and 705 to 717 (IESEEERTTESNE). A helical transmembrane segment spans residues 750–770 (IIATIALIVLGSLLLATSLFV). Topologically, residues 771 to 811 (LRYIRQSRKLHGKYNPAREEHNLSAAYAMPMSHIAKEERLI) are cytoplasmic.

It is found in the membrane. Regulates pharyngeal pumping during feeding. The chain is Abnormal pharyngeal pumping eat-20 (eat-20) from Caenorhabditis briggsae.